The primary structure comprises 896 residues: Phosphatidate phosphatase LPIN2 (896 aa).

The interval 1-108 (MNYVGQLAGQ…LPAYLATSPI (108 aa)) is N-LIP. A Phosphoserine modification is found at Ser106. A disordered region spans residues 120 to 208 (TPLVKSGGDE…SSNASLKEEE (89 aa)). Residues 152 to 162 (VKKKKRRRKKY) are compositionally biased toward basic residues. The short motif at 153–158 (KKKKRR) is the Nuclear localization signal element. Residues Ser174, Ser186, Ser187, Ser243, and Ser303 each carry the phosphoserine modification. Disordered stretches follow at residues 370–405 (AEAPSESKPAAKVDSPSKKKGVHKRSQHQGPDDIYL) and 420–459 (FPKSESEPGSRQWPESDTLSGSQSPQSVGSAAADSGTECL). Basic residues predominate over residues 387-396 (KKKGVHKRSQ). Over residues 426-448 (EPGSRQWPESDTLSGSQSPQSVG) the composition is skewed to polar residues. At Ser566 the chain carries Phosphoserine. Over residues 569–579 (KQLPESKEGKS) the composition is skewed to basic and acidic residues. The disordered stretch occupies residues 569-636 (KQLPESKEGK…LSHGSTTSYK (68 aa)). The segment covering 604–617 (SSSDEGSQELEESI) has biased composition (acidic residues). Residues 635–837 (YKKSLRLSSD…RIFTVNPKGE (203 aa)) form a C-LIP region. The DXDXT motif signature appears at 689–693 (DIDGT). The LXXIL motif signature appears at 700-704 (LGQIL).

Belongs to the lipin family. The cofactor is Mg(2+). As to expression, expressed in liver, lung, kidney, placenta, spleen, thymus, lymph node, prostate, testes, small intestine, and colon.

It is found in the nucleus. Its subcellular location is the cytoplasm. It localises to the cytosol. The protein localises to the endoplasmic reticulum membrane. The catalysed reaction is a 1,2-diacyl-sn-glycero-3-phosphate + H2O = a 1,2-diacyl-sn-glycerol + phosphate. Inhibited by N-ethylmaleimide. In terms of biological role, acts as a magnesium-dependent phosphatidate phosphatase enzyme which catalyzes the conversion of phosphatidic acid to diacylglycerol during triglyceride, phosphatidylcholine and phosphatidylethanolamine biosynthesis in the endoplasmic reticulum membrane. Plays important roles in controlling the metabolism of fatty acids at different levels. Also acts as a nuclear transcriptional coactivator for PPARGC1A to modulate lipid metabolism. The chain is Phosphatidate phosphatase LPIN2 from Homo sapiens (Human).